Reading from the N-terminus, the 282-residue chain is Probable phosphatase C1620.13 (282 aa).

Residue histidine 61 is the Tele-phosphohistidine intermediate of the active site. Glutamate 135 acts as the Proton donor/acceptor in catalysis.

This sequence belongs to the phosphoglycerate mutase family. BPG-dependent PGAM subfamily.

The protein resides in the nucleus. This Schizosaccharomyces pombe (strain 972 / ATCC 24843) (Fission yeast) protein is Probable phosphatase C1620.13.